Here is a 248-residue protein sequence, read N- to C-terminus: Pulmonary surfactant-associated protein A (248 aa).

An N-terminal signal peptide occupies residues 1-20; sequence MWLCPLALTLTLMAASGAAC. A Collagen-like domain is found at 31–100; that stretch reads GIPGTPGSHG…PGERGPPGLP (70 aa). Residues 33–100 are disordered; it reads PGTPGSHGLP…PGERGPPGLP (68 aa). Over residues 42–51 the composition is skewed to basic and acidic residues; it reads PGRDGRDGVK. A compositionally biased stretch (pro residues) spans 54–65; the sequence is PGPPGPMGPPGD. Positions 134–247 constitute a C-type lectin domain; the sequence is IGGKVFSTNG…CLYNRLTICE (114 aa). 2 cysteine pairs are disulfide-bonded: C155/C246 and C224/C238. N207 carries an N-linked (GlcNAc...) asparagine glycan. Ca(2+) is bound by residues E215, A217, N234, and D235.

Belongs to the SFTPA family. In terms of assembly, oligomeric complex of 6 set of homotrimers.

The protein localises to the secreted. It is found in the extracellular space. The protein resides in the extracellular matrix. Its subcellular location is the surface film. In terms of biological role, in presence of calcium ions, it binds to surfactant phospholipids and contributes to lower the surface tension at the air-liquid interface in the alveoli of the mammalian lung and is essential for normal respiration. Enhances the expression of MYO18A/SP-R210 on alveolar macrophages. This is Pulmonary surfactant-associated protein A (SFTPA1) from Macaca mulatta (Rhesus macaque).